The sequence spans 467 residues: Probable citrate synthase 1, mitochondrial (467 aa).

Active-site residues include His-303, His-349, and Asp-404.

Belongs to the citrate synthase family. As to quaternary structure, homodimer.

The protein resides in the mitochondrion matrix. It carries out the reaction oxaloacetate + acetyl-CoA + H2O = citrate + CoA + H(+). It participates in carbohydrate metabolism; tricarboxylic acid cycle; isocitrate from oxaloacetate: step 1/2. This chain is Probable citrate synthase 1, mitochondrial, found in Aedes aegypti (Yellowfever mosquito).